The sequence spans 64 residues: Large ribosomal subunit protein bL33 (64 aa).

This sequence belongs to the bacterial ribosomal protein bL33 family.

In Parasynechococcus marenigrum (strain WH8102), this protein is Large ribosomal subunit protein bL33.